The sequence spans 447 residues: Putative branched-chain amino acid carrier protein SSP1343 (447 aa).

The next 12 helical transmembrane spans lie at 6–26 (WIIG…IFPP), 40–60 (ILAF…VGAL), 74–94 (PKFS…LFAI), 116–136 (LALF…CINP), 143–163 (IGSL…VKGF), 192–212 (GYLT…VNAV), 228–248 (LMAG…LGYI), 289–309 (LLGI…VVAV), 324–344 (IYVI…LNSV), 349–369 (VPVL…ILLA), 381–401 (IPVA…QGWI), and 416–436 (LEWF…AAMV).

The protein belongs to the branched chain amino acid transporter family.

The protein resides in the cell membrane. Component of the transport system for branched-chain amino acids (leucine, isoleucine and valine), which is coupled to a proton motive force. The sequence is that of Putative branched-chain amino acid carrier protein SSP1343 from Staphylococcus saprophyticus subsp. saprophyticus (strain ATCC 15305 / DSM 20229 / NCIMB 8711 / NCTC 7292 / S-41).